Reading from the N-terminus, the 640-residue chain is Pleckstrin homology-like domain family B member 3 (640 aa).

Disordered stretches follow at residues 1 to 100, 162 to 189, 241 to 262, 387 to 412, and 476 to 504; these read MGTR…AARR, LEQQ…ERDR, LERE…VPDP, GLQR…RPLS, and REGT…PHPP. Low complexity predominate over residues 76-90; sequence PPIAMAATPPASTSS. A coiled-coil region spans residues 104 to 327; sequence QQLEALTRVA…ERSRLLELNC (224 aa). Residues 170–189 are compositionally biased toward basic and acidic residues; sequence QRGRQQREQEQRRLSQERDR. Residues 454–481 adopt a coiled-coil conformation; it reads DIAHMERLLQQAMAERERLLKAREGTRR. The segment covering 495–504 has biased composition (pro residues); sequence TAPPTPPHPP. Residues 532–635 form the PH domain; it reads GCCCRGPLVK…WMDVIVTAAD (104 aa).

The protein is Pleckstrin homology-like domain family B member 3 (PHLDB3) of Homo sapiens (Human).